A 433-amino-acid chain; its full sequence is Trigger factor (433 aa).

Residues 161–246 (EDRVVIDFVG…LKKVENIVLP (86 aa)) form the PPIase FKBP-type domain.

This sequence belongs to the FKBP-type PPIase family. Tig subfamily.

Its subcellular location is the cytoplasm. The catalysed reaction is [protein]-peptidylproline (omega=180) = [protein]-peptidylproline (omega=0). In terms of biological role, involved in protein export. Acts as a chaperone by maintaining the newly synthesized protein in an open conformation. Functions as a peptidyl-prolyl cis-trans isomerase. The protein is Trigger factor of Actinobacillus pleuropneumoniae serotype 5b (strain L20).